The chain runs to 219 residues: Cytidylate kinase (219 aa).

Residue Gly21–Thr29 coordinates ATP.

Belongs to the cytidylate kinase family. Type 1 subfamily.

The protein localises to the cytoplasm. It carries out the reaction CMP + ATP = CDP + ADP. It catalyses the reaction dCMP + ATP = dCDP + ADP. The protein is Cytidylate kinase of Rickettsia akari (strain Hartford).